Reading from the N-terminus, the 87-residue chain is Large ribosomal subunit protein bL27 (87 aa).

Residues 1-20 (MARKRGGSGSKNGRDSNPKY) form a disordered region.

This sequence belongs to the bacterial ribosomal protein bL27 family.

In Treponema pallidum (strain Nichols), this protein is Large ribosomal subunit protein bL27 (rpmA).